Here is a 307-residue protein sequence, read N- to C-terminus: tRNA pseudouridine synthase B (307 aa).

Aspartate 38 acts as the Nucleophile in catalysis.

This sequence belongs to the pseudouridine synthase TruB family. Type 1 subfamily.

It carries out the reaction uridine(55) in tRNA = pseudouridine(55) in tRNA. In terms of biological role, responsible for synthesis of pseudouridine from uracil-55 in the psi GC loop of transfer RNAs. This Bacillus cytotoxicus (strain DSM 22905 / CIP 110041 / 391-98 / NVH 391-98) protein is tRNA pseudouridine synthase B.